A 353-amino-acid polypeptide reads, in one-letter code: Photosystem II D2 protein (353 aa).

Thr-2 bears the N-acetylthreonine mark. A Phosphothreonine modification is found at Thr-2. A helical transmembrane segment spans residues 41 to 61; the sequence is CAYFALGGWFTGTTFVTSWYT. His-118 contacts chlorophyll a. A helical membrane pass occupies residues 125-141; it reads GFMLRQFELARSVQLRP. Residues Gln-130 and Asn-143 each coordinate pheophytin a. A helical transmembrane segment spans residues 153-166; the sequence is VFVSVFLIYPLGQS. Position 198 (His-198) interacts with chlorophyll a. A helical transmembrane segment spans residues 208–228; it reads AALLCAIHGATVENTLFEDGD. A plastoquinone-binding residues include His-215 and Phe-262. His-215 contacts Fe cation. His-269 lines the Fe cation pocket. A helical transmembrane segment spans residues 279–295; sequence GLWMSAIGVVGLALNLR.

It belongs to the reaction center PufL/M/PsbA/D family. As to quaternary structure, PSII is composed of 1 copy each of membrane proteins PsbA, PsbB, PsbC, PsbD, PsbE, PsbF, PsbH, PsbI, PsbJ, PsbK, PsbL, PsbM, PsbT, PsbX, PsbY, PsbZ, Psb30/Ycf12, at least 3 peripheral proteins of the oxygen-evolving complex and a large number of cofactors. It forms dimeric complexes. It depends on The D1/D2 heterodimer binds P680, chlorophylls that are the primary electron donor of PSII, and subsequent electron acceptors. It shares a non-heme iron and each subunit binds pheophytin, quinone, additional chlorophylls, carotenoids and lipids. There is also a Cl(-1) ion associated with D1 and D2, which is required for oxygen evolution. The PSII complex binds additional chlorophylls, carotenoids and specific lipids. as a cofactor.

It localises to the plastid. It is found in the chloroplast thylakoid membrane. The catalysed reaction is 2 a plastoquinone + 4 hnu + 2 H2O = 2 a plastoquinol + O2. In terms of biological role, photosystem II (PSII) is a light-driven water:plastoquinone oxidoreductase that uses light energy to abstract electrons from H(2)O, generating O(2) and a proton gradient subsequently used for ATP formation. It consists of a core antenna complex that captures photons, and an electron transfer chain that converts photonic excitation into a charge separation. The D1/D2 (PsbA/PsbD) reaction center heterodimer binds P680, the primary electron donor of PSII as well as several subsequent electron acceptors. D2 is needed for assembly of a stable PSII complex. The sequence is that of Photosystem II D2 protein from Welwitschia mirabilis (Tree tumbo).